A 501-amino-acid polypeptide reads, in one-letter code: Raftlin-2 (501 aa).

Disordered stretches follow at residues Met-1–Phe-20 and Ser-196–Glu-239. Gly-2 carries N-myristoyl glycine lipidation. Residue Cys-3 is the site of S-palmitoyl cysteine attachment. Polar residues predominate over residues Gly-220–Ser-233. A Phosphoserine modification is found at Ser-405. Residues Ala-407–Glu-449 form a disordered region. The residue at position 409 (Thr-409) is a Phosphothreonine. A compositionally biased stretch (basic and acidic residues) spans Pro-410 to Lys-425. Residues Thr-427 to Ala-441 show a composition bias toward polar residues. Residue Ser-430 is modified to Phosphoserine.

The protein belongs to the raftlin family.

The protein localises to the cell membrane. Functionally, upon bacterial lipopolysaccharide stimulation, mediates clathrin-dependent internalization of TLR4 in dendritic cells, resulting in activation of TICAM1-mediated signaling and subsequent IFNB1 production. May regulate B-cell antigen receptor-mediated signaling. This is Raftlin-2 (RFTN2) from Homo sapiens (Human).